A 541-amino-acid chain; its full sequence is Chaperonin GroEL 2 (541 aa).

ATP contacts are provided by residues 29–32, 86–90, Gly413, 476–478, and Asp492; these read TLGP, DGTTT, and NAA.

The protein belongs to the chaperonin (HSP60) family. As to quaternary structure, forms a cylinder of 14 subunits composed of two heptameric rings stacked back-to-back. Interacts with the co-chaperonin GroES.

The protein resides in the secreted. Its subcellular location is the capsule. It is found in the cell surface. It localises to the cell wall. It catalyses the reaction ATP + H2O + a folded polypeptide = ADP + phosphate + an unfolded polypeptide.. Functionally, together with its co-chaperonin GroES, plays an essential role in assisting protein folding. The GroEL-GroES system forms a nano-cage that allows encapsulation of the non-native substrate proteins and provides a physical environment optimized to promote and accelerate protein folding. In Mycobacterium avium (strain 104), this protein is Chaperonin GroEL 2.